The sequence spans 388 residues: Transcriptional regulatory protein EmbR (388 aa).

Residues 2-105 constitute a DNA-binding region (ompR/PhoB-type); sequence AGSATVEKRL…AAPPGYRLSI (104 aa). Residues 308-357 enclose the FHA domain; it reads TRIGRLHDNDIVLDSANVSRHHAVIVDTGTNYVINDLRSSNGVHVQHERI.

This sequence belongs to the AfsR/DnrI/RedD regulatory family. Phosphorylated on threonine residue(s).

In terms of biological role, positively regulates the transcription of the embCAB operon. Exhibits ATPase and GTPase activities. This is Transcriptional regulatory protein EmbR (embR) from Mycobacterium bovis (strain ATCC BAA-935 / AF2122/97).